A 737-amino-acid chain; its full sequence is Cellulose synthase-like protein E1 (737 aa).

A run of 2 helical transmembrane segments spans residues 26–45 (AVYR…VLYY) and 58–78 (AAWL…VIAQ). Catalysis depends on residues Asp-146 and Asp-451. 5 helical membrane-spanning segments follow: residues 528–548 (LWAA…LGLV), 551–571 (TPLF…VFCV), 654–674 (VIIA…LSQI), 683–703 (WNVF…NMPI), and 716–736 (IPTA…LVPI).

Belongs to the glycosyltransferase 2 family. Plant cellulose synthase-like E subfamily.

Its subcellular location is the golgi apparatus membrane. In terms of biological role, thought to be a Golgi-localized beta-glycan synthase that polymerize the backbones of noncellulosic polysaccharides (hemicelluloses) of plant cell wall. This Oryza sativa subsp. japonica (Rice) protein is Cellulose synthase-like protein E1 (CSLE1).